An 88-amino-acid chain; its full sequence is Putative transmembrane protein ORF24 (88 aa).

3 consecutive transmembrane segments (helical) span residues 16-36, 42-62, and 64-84; these read LNMGLALLLATIMVMILWAGM, AVFVIWALTSITLIFTFVTQF, and FIWFWVMVMLSLLLISIVASI.

Its subcellular location is the host membrane. This is Putative transmembrane protein ORF24 from Haloarcula hispanica (His1V).